We begin with the raw amino-acid sequence, 177 residues long: Protein VERNALIZATION 3 (177 aa).

Belongs to the phosphatidylethanolamine-binding protein family. As to expression, expressed in leaves but not in shoot apex.

Functionally, involved in the regulation of vernalization and of flowering time; this process in essential for flowering in cv. Bd29-1 but seems do not occur in cv. Bd21. In Brachypodium distachyon (Purple false brome), this protein is Protein VERNALIZATION 3.